We begin with the raw amino-acid sequence, 260 residues long: NAD-capped RNA hydrolase NudC (260 aa).

Substrate is bound by residues K25 and R69. 2 residues coordinate Zn(2+): C98 and C101. Position 111 (E111) interacts with substrate. C116 and C119 together coordinate Zn(2+). Position 124 (Y124) interacts with substrate. The region spanning 125–248 is the Nudix hydrolase domain; the sequence is PQIAPCVIVA…TVARRLIEDT (124 aa). A divalent metal cation is bound by residues A158, E174, and E178. A Nudix box motif is present at residues 159 to 180; that stretch reads GFVEVGETLEQAVSREVLEESN. 192–199 contacts substrate; it reads QPWPFPHS. An a divalent metal cation-binding site is contributed by E219. Position 241 (A241) interacts with substrate.

Belongs to the Nudix hydrolase family. NudC subfamily. Homodimer. The cofactor is Mg(2+). Mn(2+) is required as a cofactor. Zn(2+) serves as cofactor.

The enzyme catalyses a 5'-end NAD(+)-phospho-ribonucleoside in mRNA + H2O = a 5'-end phospho-adenosine-phospho-ribonucleoside in mRNA + beta-nicotinamide D-ribonucleotide + 2 H(+). It carries out the reaction NAD(+) + H2O = beta-nicotinamide D-ribonucleotide + AMP + 2 H(+). The catalysed reaction is NADH + H2O = reduced beta-nicotinamide D-ribonucleotide + AMP + 2 H(+). Functionally, mRNA decapping enzyme that specifically removes the nicotinamide adenine dinucleotide (NAD) cap from a subset of mRNAs by hydrolyzing the diphosphate linkage to produce nicotinamide mononucleotide (NMN) and 5' monophosphate mRNA. The NAD-cap is present at the 5'-end of some mRNAs and stabilizes RNA against 5'-processing. Has preference for mRNAs with a 5'-end purine. Catalyzes the hydrolysis of a broad range of dinucleotide pyrophosphates. The chain is NAD-capped RNA hydrolase NudC from Yersinia pseudotuberculosis serotype O:1b (strain IP 31758).